The following is a 404-amino-acid chain: Probable pectate lyase 18 (404 aa).

The N-terminal stretch at 1–20 (MSTLFFTFSLLLLAPLLVIS) is a signal peptide. Asparagine 37 is a glycosylation site (N-linked (GlcNAc...) asparagine). Cysteine 159 and cysteine 178 are disulfide-bonded. An N-linked (GlcNAc...) asparagine glycan is attached at asparagine 191. Aspartate 200, aspartate 202, aspartate 224, and aspartate 228 together coordinate Ca(2+). Arginine 280 is an active-site residue.

The protein belongs to the polysaccharide lyase 1 family. Ca(2+) serves as cofactor. As to expression, predominantly found in the pistil where it is found in the outer five layers of the strands of transmitting tissue within the upper two-thirds of the style. Found at much lower levels in the anthers and vegetative organs.

It is found in the secreted. The enzyme catalyses Eliminative cleavage of (1-&gt;4)-alpha-D-galacturonan to give oligosaccharides with 4-deoxy-alpha-D-galact-4-enuronosyl groups at their non-reducing ends.. Its pathway is glycan metabolism; pectin degradation; 2-dehydro-3-deoxy-D-gluconate from pectin: step 2/5. May have a role in the development of the transmitting tissue of the style and/or in the events related to pollination such as some aspect in the facilitation of compatible pollen tube growth. This is Probable pectate lyase 18 from Solanum lycopersicum (Tomato).